A 513-amino-acid chain; its full sequence is ATP synthase subunit alpha 1 (513 aa).

Gly-169–Thr-176 serves as a coordination point for ATP.

It belongs to the ATPase alpha/beta chains family. In terms of assembly, F-type ATPases have 2 components, CF(1) - the catalytic core - and CF(0) - the membrane proton channel. CF(1) has five subunits: alpha(3), beta(3), gamma(1), delta(1), epsilon(1). CF(0) has three main subunits: a(1), b(2) and c(9-12). The alpha and beta chains form an alternating ring which encloses part of the gamma chain. CF(1) is attached to CF(0) by a central stalk formed by the gamma and epsilon chains, while a peripheral stalk is formed by the delta and b chains.

It is found in the cell inner membrane. The enzyme catalyses ATP + H2O + 4 H(+)(in) = ADP + phosphate + 5 H(+)(out). Functionally, produces ATP from ADP in the presence of a proton gradient across the membrane. The alpha chain is a regulatory subunit. In Nitrosomonas eutropha (strain DSM 101675 / C91 / Nm57), this protein is ATP synthase subunit alpha 1.